Consider the following 460-residue polypeptide: Serine/threonine-protein kinase cds1 (460 aa).

Residues 60–116 (WRFGRHKSCEVVLNGPRVSNFHFEIYQGHRNDSDESENVVFLHDHSSNGTFLNFERL) form the FHA domain. Residues 167–433 (YEIIRTLGSG…ESEALQHPWF (267 aa)) enclose the Protein kinase domain. ATP is bound by residues 173 to 181 (LGSGTFAVV) and lysine 196. Aspartate 294 serves as the catalytic Proton acceptor. A compositionally biased stretch (basic and acidic residues) spans 438–453 (THEHRTPPSSSEHEAT). Positions 438-460 (THEHRTPPSSSEHEATEQLNSSS) are disordered. Phosphothreonine is present on threonine 443.

The protein belongs to the protein kinase superfamily. CAMK Ser/Thr protein kinase family. CHEK2 subfamily. As to quaternary structure, interacts with rad26. Post-translationally, autophosphorylated.

It carries out the reaction L-seryl-[protein] + ATP = O-phospho-L-seryl-[protein] + ADP + H(+). It catalyses the reaction L-threonyl-[protein] + ATP = O-phospho-L-threonyl-[protein] + ADP + H(+). In terms of biological role, has a role in the DNA replication-monitoring S/G2 checkpoint system. It is responsible for blocking mitosis in the S phase. It monitors DNA synthesis by interacting with DNA polymerase alpha and sends a signal to block the onset of mitosis while DNA synthesis is in progress. Phosphorylates rad60 and dna2. The sequence is that of Serine/threonine-protein kinase cds1 (cds1) from Schizosaccharomyces pombe (strain 972 / ATCC 24843) (Fission yeast).